A 434-amino-acid polypeptide reads, in one-letter code: UDP-glucose 6-dehydrogenase (434 aa).

Residues 2 to 19 (NITF…GIIM), Val11, Asp30, Lys35, Thr121, and Glu152 contribute to the NAD(+) site. Substrate contacts are provided by residues 148-152 (EFLRE), Lys204, Asn208, 249-253 (FLNAG), and Gly257. Cys260 (nucleophile) is an active-site residue. Lys263 is an NAD(+) binding site. A substrate-binding site is contributed by Lys321. Arg328 is an NAD(+) binding site.

Belongs to the UDP-glucose/GDP-mannose dehydrogenase family.

The enzyme catalyses UDP-alpha-D-glucose + 2 NAD(+) + H2O = UDP-alpha-D-glucuronate + 2 NADH + 3 H(+). It functions in the pathway nucleotide-sugar biosynthesis; UDP-alpha-D-glucuronate biosynthesis; UDP-alpha-D-glucuronate from UDP-alpha-D-glucose: step 1/1. The protein is UDP-glucose 6-dehydrogenase (udg) of Rickettsia typhi (strain ATCC VR-144 / Wilmington).